Here is a 141-residue protein sequence, read N- to C-terminus: Putative pre-16S rRNA nuclease (141 aa).

This sequence belongs to the YqgF nuclease family.

Its subcellular location is the cytoplasm. Its function is as follows. Could be a nuclease involved in processing of the 5'-end of pre-16S rRNA. The protein is Putative pre-16S rRNA nuclease of Chlorobium luteolum (strain DSM 273 / BCRC 81028 / 2530) (Pelodictyon luteolum).